The following is a 295-amino-acid chain: Tyrosine recombinase XerD (295 aa).

Residues 1–85 (MNTIIEEYLN…TIRSFHQFAL (85 aa)) enclose the Core-binding (CB) domain. Residues 106–289 (KLPDVLEIDE…SKSQIRKMYT (184 aa)) form the Tyr recombinase domain. Catalysis depends on residues Arg146, Lys170, His241, Arg244, and His267. Tyr276 acts as the O-(3'-phospho-DNA)-tyrosine intermediate in catalysis.

It belongs to the 'phage' integrase family. XerD subfamily. As to quaternary structure, forms a cyclic heterotetrameric complex composed of two molecules of XerC and two molecules of XerD.

It localises to the cytoplasm. Its function is as follows. Site-specific tyrosine recombinase, which acts by catalyzing the cutting and rejoining of the recombining DNA molecules. The XerC-XerD complex is essential to convert dimers of the bacterial chromosome into monomers to permit their segregation at cell division. It also contributes to the segregational stability of plasmids. The protein is Tyrosine recombinase XerD of Staphylococcus epidermidis (strain ATCC 35984 / DSM 28319 / BCRC 17069 / CCUG 31568 / BM 3577 / RP62A).